Here is a 172-residue protein sequence, read N- to C-terminus: 6,7-dimethyl-8-ribityllumazine synthase (172 aa).

5-amino-6-(D-ribitylamino)uracil is bound by residues phenylalanine 24, 58 to 60, and 82 to 84; these read ALE and AVI. 87–88 contributes to the (2S)-2-hydroxy-3-oxobutyl phosphate binding site; the sequence is ET. Catalysis depends on histidine 90, which acts as the Proton donor. A 5-amino-6-(D-ribitylamino)uracil-binding site is contributed by asparagine 115. Position 129 (arginine 129) interacts with (2S)-2-hydroxy-3-oxobutyl phosphate. Residues 150–172 are disordered; that stretch reads ALEQLDGDEDDEGEGEDDEEERA. Acidic residues predominate over residues 154–172; sequence LDGDEDDEGEGEDDEEERA.

The protein belongs to the DMRL synthase family.

The catalysed reaction is (2S)-2-hydroxy-3-oxobutyl phosphate + 5-amino-6-(D-ribitylamino)uracil = 6,7-dimethyl-8-(1-D-ribityl)lumazine + phosphate + 2 H2O + H(+). Its pathway is cofactor biosynthesis; riboflavin biosynthesis; riboflavin from 2-hydroxy-3-oxobutyl phosphate and 5-amino-6-(D-ribitylamino)uracil: step 1/2. Functionally, catalyzes the formation of 6,7-dimethyl-8-ribityllumazine by condensation of 5-amino-6-(D-ribitylamino)uracil with 3,4-dihydroxy-2-butanone 4-phosphate. This is the penultimate step in the biosynthesis of riboflavin. This chain is 6,7-dimethyl-8-ribityllumazine synthase, found in Paraburkholderia phymatum (strain DSM 17167 / CIP 108236 / LMG 21445 / STM815) (Burkholderia phymatum).